Here is a 380-residue protein sequence, read N- to C-terminus: Crotonobetainyl-CoA reductase (380 aa).

Belongs to the acyl-CoA dehydrogenase family. Homotetramer. It depends on FAD as a cofactor.

The protein resides in the cytoplasm. It carries out the reaction 4-(trimethylamino)butanoyl-CoA + oxidized [electron-transfer flavoprotein] + H(+) = crotonobetainyl-CoA + reduced [electron-transfer flavoprotein]. The protein operates within amine and polyamine metabolism; carnitine metabolism. In terms of biological role, catalyzes the reduction of crotonobetainyl-CoA to gamma-butyrobetainyl-CoA. The polypeptide is Crotonobetainyl-CoA reductase (Salmonella arizonae (strain ATCC BAA-731 / CDC346-86 / RSK2980)).